Here is a 346-residue protein sequence, read N- to C-terminus: Protein NDL1 (346 aa).

Belongs to the NDRG family. Interacts with GB1. Interacts with the heterodimers formed by GB1 and GG1, or GB1 and GG2. Interacts with RGS1. As to expression, expressed in root vasculature, cotyledons, leaves, petals, mature stamens and pollen grains.

It is found in the cytoplasm. In terms of biological role, interacts with the heterotrimeric G protein beta subunit GB1 and plays an significant role in GB1-dependent regulation of lateral root formation. Involved in a signaling pathway that modulates root auxin transport and auxin gradients. Acts partially by positively regulating the auxin carrier PIN2 and AUX1. Acts, together with GB1 as positive regulator of meristem initiation and branching. GB1 and NDL1 positively regulate basipetal inflorescence auxin transport and modulate MAX2 expression in shoots, which regulates organ and lateral meristem formation by the establishment and maintenance of auxin gradients. The sequence is that of Protein NDL1 from Arabidopsis thaliana (Mouse-ear cress).